A 192-amino-acid chain; its full sequence is MEQLNICIDIDGTITDAYYWIDLCNSYFKTSITEKDATQYYIHKILNVPLEEYNEFYEKYKYKLHSEQKLRKDVKSVITKLSQNNNIFFVTARERDLTILTYSYLRKKEIPYDSLFILGTHHKVPTARQLNCDLFIEDNYDNALELSKAGFKVLLIDTYYNRKPLNQNIIRFYNWDEVYGIVDRLFEKSEAI.

Belongs to the 5'(3')-deoxyribonucleotidase family. Mg(2+) is required as a cofactor.

It catalyses the reaction sugar phosphate + H2O = sugar + phosphate.. Its function is as follows. Catalyzes the dephosphorylation of nucleotide monophosphates and of different sugar phosphates in vitro. In Clostridium acetobutylicum (strain ATCC 824 / DSM 792 / JCM 1419 / IAM 19013 / LMG 5710 / NBRC 13948 / NRRL B-527 / VKM B-1787 / 2291 / W), this protein is Nucleotidase CA_C3379.